Here is a 506-residue protein sequence, read N- to C-terminus: MKEYPVYLEQARSRQQDFLYPLLFREYIYGLAYSHNWNRSIFLENGGYDNKYSLLIVKRLITRMYQQNHLIISANDSTKNPFGGYNKNLDSQIISEGFAIVVEIPFLLQLSSSLEEGEILQSYQNLRSIHSIFPFLEDKLTYLNYVADIRIPYPIHLEILVQILRYWVKDVPFFHLLRLFLYHFCNRNSFITTKKSISTFSKSNPRLFLFLYNFYVCEYEYFFVFLRTQSSHLRFQYFSVFFERIFFDAKREHLVKVFSKDFSYTLTLFKDPNIHYVRYQGKCILTSKNAPFLMNKWKHYFIHLWQCFFDIWSQPRMININPLSEHSFQLLGYFLNVRLNRSVVRSQMLQNTFLIEIVIQKLDIIVPILPLIRSLANAKFCNIVGEPISKPVWADSSDFDIIDRFLRICRNLSHYYNGSSKKKSLYRIKYILRLSCIKTLACKHKSTVRAFLKRSGSEELLQEFFTEEEEILSLIFPRDSSTLQRLHRNRIWYLDIIFSNDLVHDE.

Belongs to the intron maturase 2 family. MatK subfamily.

It localises to the plastid. It is found in the chloroplast. In terms of biological role, usually encoded in the trnK tRNA gene intron. Probably assists in splicing its own and other chloroplast group II introns. In Lathyrus aphaca (Yellow vetchling), this protein is Maturase K.